Consider the following 104-residue polypeptide: Flagellar hook-basal body complex protein FliE (104 aa).

Belongs to the FliE family.

The protein localises to the bacterial flagellum basal body. This Escherichia coli O139:H28 (strain E24377A / ETEC) protein is Flagellar hook-basal body complex protein FliE.